The chain runs to 1383 residues: DNA-directed RNA polymerase subunit beta (1383 aa).

It belongs to the RNA polymerase beta chain family. The RNAP catalytic core consists of 2 alpha, 1 beta, 1 beta' and 1 omega subunit. When a sigma factor is associated with the core the holoenzyme is formed, which can initiate transcription.

It carries out the reaction RNA(n) + a ribonucleoside 5'-triphosphate = RNA(n+1) + diphosphate. DNA-dependent RNA polymerase catalyzes the transcription of DNA into RNA using the four ribonucleoside triphosphates as substrates. The polypeptide is DNA-directed RNA polymerase subunit beta (Bartonella henselae (strain ATCC 49882 / DSM 28221 / CCUG 30454 / Houston 1) (Rochalimaea henselae)).